The following is a 226-amino-acid chain: Cytidylate kinase (226 aa).

11–19 (GPASAGKST) serves as a coordination point for ATP.

This sequence belongs to the cytidylate kinase family. Type 1 subfamily.

It localises to the cytoplasm. It catalyses the reaction CMP + ATP = CDP + ADP. The enzyme catalyses dCMP + ATP = dCDP + ADP. The polypeptide is Cytidylate kinase (Limosilactobacillus fermentum (strain NBRC 3956 / LMG 18251) (Lactobacillus fermentum)).